The sequence spans 378 residues: Erythronate-4-phosphate dehydrogenase (378 aa).

Residues S45 and T66 each contribute to the substrate site. NAD(+) is bound by residues D146 and T175. R208 is an active-site residue. D232 contributes to the NAD(+) binding site. E237 is a catalytic residue. H254 serves as the catalytic Proton donor. NAD(+) is bound at residue G257. Y258 is a substrate binding site.

It belongs to the D-isomer specific 2-hydroxyacid dehydrogenase family. PdxB subfamily. In terms of assembly, homodimer.

Its subcellular location is the cytoplasm. The enzyme catalyses 4-phospho-D-erythronate + NAD(+) = (R)-3-hydroxy-2-oxo-4-phosphooxybutanoate + NADH + H(+). Its pathway is cofactor biosynthesis; pyridoxine 5'-phosphate biosynthesis; pyridoxine 5'-phosphate from D-erythrose 4-phosphate: step 2/5. Functionally, catalyzes the oxidation of erythronate-4-phosphate to 3-hydroxy-2-oxo-4-phosphonooxybutanoate. This is Erythronate-4-phosphate dehydrogenase from Escherichia coli O139:H28 (strain E24377A / ETEC).